A 263-amino-acid chain; its full sequence is Proteasome subunit alpha type-1 (263 aa).

The residue at position 1 (M1) is an N-acetylmethionine. S110 carries the post-translational modification Phosphoserine; alternate. O-linked (GlcNAc) serine; alternate glycosylation is present at S110. K115 participates in a covalent cross-link: Glycyl lysine isopeptide (Lys-Gly) (interchain with G-Cter in ubiquitin). S177 bears the Phosphoserine mark. K208 participates in a covalent cross-link: Glycyl lysine isopeptide (Lys-Gly) (interchain with G-Cter in ubiquitin). The disordered stretch occupies residues F232–H263. Positions P253–H263 are enriched in basic and acidic residues.

Belongs to the peptidase T1A family. As to quaternary structure, the 26S proteasome consists of a 20S proteasome core and two 19S regulatory subunits. The 20S proteasome core is a barrel-shaped complex made of 28 subunits that are arranged in four stacked rings. The two outer rings are each formed by seven alpha subunits, and the two inner rings are formed by seven beta subunits. The proteolytic activity is exerted by three beta-subunits PSMB5, PSMB6 and PSMB7. Interacts with NOTCH3. Interacts with ZFAND1.

It is found in the cytoplasm. The protein resides in the nucleus. In terms of biological role, component of the 20S core proteasome complex involved in the proteolytic degradation of most intracellular proteins. This complex plays numerous essential roles within the cell by associating with different regulatory particles. Associated with two 19S regulatory particles, forms the 26S proteasome and thus participates in the ATP-dependent degradation of ubiquitinated proteins. The 26S proteasome plays a key role in the maintenance of protein homeostasis by removing misfolded or damaged proteins that could impair cellular functions, and by removing proteins whose functions are no longer required. Associated with the PA200 or PA28, the 20S proteasome mediates ubiquitin-independent protein degradation. This type of proteolysis is required in several pathways including spermatogenesis (20S-PA200 complex) or generation of a subset of MHC class I-presented antigenic peptides (20S-PA28 complex). This is Proteasome subunit alpha type-1 (PSMA1) from Bos taurus (Bovine).